A 555-amino-acid chain; its full sequence is Serine/threonine-protein kinase Nek4 (555 aa).

In terms of domain architecture, Protein kinase spans 4–258 (YEVLEQIGKG…ANELLNHPHL (255 aa)). Residues 10-18 (IGKGSFGSA) and K33 contribute to the ATP site. Residue D129 is the Proton acceptor of the active site. Disordered stretches follow at residues 288–328 (LKER…MFNG), 346–372 (QRQE…KAST), and 443–477 (NRET…ITKD). Residues 304–320 (PSVSDTEAGSVSSSGKA) are compositionally biased toward polar residues.

This sequence belongs to the protein kinase superfamily. NEK Ser/Thr protein kinase family. NIMA subfamily.

It catalyses the reaction L-seryl-[protein] + ATP = O-phospho-L-seryl-[protein] + ADP + H(+). It carries out the reaction L-threonyl-[protein] + ATP = O-phospho-L-threonyl-[protein] + ADP + H(+). Functionally, may be involved in plant development processes. The polypeptide is Serine/threonine-protein kinase Nek4 (NEK4) (Arabidopsis thaliana (Mouse-ear cress)).